The chain runs to 429 residues: MSKSLQAIRGMNDILPEQTPAWRYLERTFAGLLDGYGYSEIRLPILEFTELFARGIGEGTDVVDKEMYTFLDRNGESLTMRPEGTAGCVRAVLEHGLSGGGQVQKLWYTGPMFRYEKPQKGRYRQFHQIGVEVFNLPGPDIDAELIILTWRLWQKLGMADAVTLQLNTLGSSEARARYREALVAYLQERFEQLDEDSQRRMTTNPLRILDSKVESTQALLVGAPTLHDYLDEESIAHFEGLKARLDAVGLRYEINQKLVRGLDYYCRTAFEWVTDKLGAQGTVCGGGRYDGLVSQFGGKPTPGVGFAMGVERLVLLLETLGVIPAELNRPADLYVCAFGEPAELAALTLAEQLRSAIPGIRLLVNAGAGSFKSQFKKADKSGARFALILGEDEVANRVVGFKPLRDEGEQQSIAWDALPEHLAACLEQA.

Belongs to the class-II aminoacyl-tRNA synthetase family. In terms of assembly, homodimer.

Its subcellular location is the cytoplasm. It catalyses the reaction tRNA(His) + L-histidine + ATP = L-histidyl-tRNA(His) + AMP + diphosphate + H(+). The polypeptide is Histidine--tRNA ligase (Pseudomonas aeruginosa (strain LESB58)).